The sequence spans 616 residues: Dihydroxy-acid dehydratase (616 aa).

Asp81 is a binding site for Mg(2+). Cys122 serves as a coordination point for [2Fe-2S] cluster. Mg(2+)-binding residues include Asp123 and Lys124. Lys124 carries the N6-carboxylysine modification. A [2Fe-2S] cluster-binding site is contributed by Cys195. Glu491 is a Mg(2+) binding site. The active-site Proton acceptor is the Ser517.

This sequence belongs to the IlvD/Edd family. Homodimer. Requires [2Fe-2S] cluster as cofactor. It depends on Mg(2+) as a cofactor.

The enzyme catalyses (2R)-2,3-dihydroxy-3-methylbutanoate = 3-methyl-2-oxobutanoate + H2O. It carries out the reaction (2R,3R)-2,3-dihydroxy-3-methylpentanoate = (S)-3-methyl-2-oxopentanoate + H2O. The protein operates within amino-acid biosynthesis; L-isoleucine biosynthesis; L-isoleucine from 2-oxobutanoate: step 3/4. Its pathway is amino-acid biosynthesis; L-valine biosynthesis; L-valine from pyruvate: step 3/4. In terms of biological role, functions in the biosynthesis of branched-chain amino acids. Catalyzes the dehydration of (2R,3R)-2,3-dihydroxy-3-methylpentanoate (2,3-dihydroxy-3-methylvalerate) into 2-oxo-3-methylpentanoate (2-oxo-3-methylvalerate) and of (2R)-2,3-dihydroxy-3-methylbutanoate (2,3-dihydroxyisovalerate) into 2-oxo-3-methylbutanoate (2-oxoisovalerate), the penultimate precursor to L-isoleucine and L-valine, respectively. The chain is Dihydroxy-acid dehydratase from Methylocella silvestris (strain DSM 15510 / CIP 108128 / LMG 27833 / NCIMB 13906 / BL2).